The primary structure comprises 140 residues: ATP synthase epsilon chain (140 aa).

It belongs to the ATPase epsilon chain family. In terms of assembly, F-type ATPases have 2 components, CF(1) - the catalytic core - and CF(0) - the membrane proton channel. CF(1) has five subunits: alpha(3), beta(3), gamma(1), delta(1), epsilon(1). CF(0) has three main subunits: a, b and c.

The protein resides in the cell inner membrane. Functionally, produces ATP from ADP in the presence of a proton gradient across the membrane. The sequence is that of ATP synthase epsilon chain from Alkalilimnicola ehrlichii (strain ATCC BAA-1101 / DSM 17681 / MLHE-1).